The chain runs to 1161 residues: DNA-directed RNA polymerase subunit beta (1161 aa).

The protein belongs to the RNA polymerase beta chain family. The RNAP catalytic core consists of 2 alpha, 1 beta, 1 beta' and 1 omega subunit. When a sigma factor is associated with the core the holoenzyme is formed, which can initiate transcription.

The catalysed reaction is RNA(n) + a ribonucleoside 5'-triphosphate = RNA(n+1) + diphosphate. DNA-dependent RNA polymerase catalyzes the transcription of DNA into RNA using the four ribonucleoside triphosphates as substrates. The sequence is that of DNA-directed RNA polymerase subunit beta from Streptomyces avermitilis (strain ATCC 31267 / DSM 46492 / JCM 5070 / NBRC 14893 / NCIMB 12804 / NRRL 8165 / MA-4680).